A 491-amino-acid polypeptide reads, in one-letter code: Glucose-6-phosphate 1-dehydrogenase (491 aa).

Residues Arg-50, 92-93, and Lys-147 contribute to the NADP(+) site; that span reads DV. Residues His-177, Lys-181, Glu-215, and Asp-234 each coordinate substrate. The active-site Proton acceptor is His-239. Positions 339 and 344 each coordinate substrate.

It belongs to the glucose-6-phosphate dehydrogenase family.

It catalyses the reaction D-glucose 6-phosphate + NADP(+) = 6-phospho-D-glucono-1,5-lactone + NADPH + H(+). The protein operates within carbohydrate degradation; pentose phosphate pathway; D-ribulose 5-phosphate from D-glucose 6-phosphate (oxidative stage): step 1/3. Its function is as follows. Catalyzes the oxidation of glucose 6-phosphate to 6-phosphogluconolactone. The chain is Glucose-6-phosphate 1-dehydrogenase from Dickeya dadantii (strain 3937) (Erwinia chrysanthemi (strain 3937)).